Consider the following 152-residue polypeptide: Ribosomal RNA large subunit methyltransferase H (152 aa).

S-adenosyl-L-methionine-binding positions include L69, G96, and 118 to 123; that span reads FGKLTF.

This sequence belongs to the RNA methyltransferase RlmH family. As to quaternary structure, homodimer.

The protein resides in the cytoplasm. The enzyme catalyses pseudouridine(1915) in 23S rRNA + S-adenosyl-L-methionine = N(3)-methylpseudouridine(1915) in 23S rRNA + S-adenosyl-L-homocysteine + H(+). Its function is as follows. Specifically methylates the pseudouridine at position 1915 (m3Psi1915) in 23S rRNA. This is Ribosomal RNA large subunit methyltransferase H from Mesomycoplasma hyopneumoniae (strain 7448) (Mycoplasma hyopneumoniae).